The primary structure comprises 271 residues: Low choriolytic enzyme (271 aa).

Positions Met-1–Ala-20 are cleaved as a signal peptide. The propeptide at Gln-21 to Arg-71 is activation peptide. N-linked (GlcNAc...) asparagine glycans are attached at residues Asn-30 and Asn-54. A Peptidase M12A domain is found at Asn-72 to Cys-271. Cystine bridges form between Cys-76/Cys-83, Cys-123/Cys-271, and Cys-144/Cys-164. Residue His-172 participates in Zn(2+) binding. Residue Glu-173 is part of the active site. 2 residues coordinate Zn(2+): His-176 and His-182. Asn-211 is a glycosylation site (N-linked (GlcNAc...) asparagine).

Zn(2+) serves as cofactor.

The protein localises to the zymogen granule. It carries out the reaction Hydrolysis of the inner layer of fish egg envelope. Also hydrolysis of casein and small molecule substrates such as succinyl-Leu-Leu-Val-Tyr-|-7-(4-methyl)coumarylamide.. Functionally, participates in the breakdown of the egg envelope, which is derived from the egg extracellular matrix, at the time of hatching. Thus allowing the newly hatched fish to swim free. LCE solubilizes the egg envelope only after it has been swollen by the action of HCE. This Oryzias latipes (Japanese rice fish) protein is Low choriolytic enzyme (lce).